Reading from the N-terminus, the 120-residue chain is NADH dehydrogenase [ubiquinone] 1 subunit C2 (120 aa).

At methionine 1 the chain carries N-acetylmethionine. A helical membrane pass occupies residues 57-76; that stretch reads GLHRQLLYITSFVFVGYYLL.

The protein belongs to the complex I NDUFC2 subunit family. In terms of assembly, complex I is composed of 45 different subunits. Interacts with TMEM242. There is a minor unacetylated form of subunit B14.5b.

The protein localises to the mitochondrion inner membrane. In terms of biological role, accessory subunit of the mitochondrial membrane respiratory chain NADH dehydrogenase (Complex I), that is believed not to be involved in catalysis but required for the complex assembly. Complex I functions in the transfer of electrons from NADH to the respiratory chain. The immediate electron acceptor for the enzyme is believed to be ubiquinone. In Bos taurus (Bovine), this protein is NADH dehydrogenase [ubiquinone] 1 subunit C2.